The sequence spans 377 residues: Presenilin-associated rhomboid-like protein, mitochondrial (377 aa).

Residues 1 to 50 (MALQGWVQRGWRCGPAWAPPLGGGYRELSATQAPRLLGRRFNLFVQQKCG) constitute a mitochondrion transit peptide. At 51–99 (FRKAPRKVEPRRSDTGSSGEAYKRSALIPPLEETVFYPSPYPIRTLVKP) the chain is on the mitochondrial matrix side. A phosphoserine mark is found at S63 and S68. The chain crosses the membrane as a helical span at residues 100 to 119 (FFFTIGFTGCAFGSAAIWQY). Residues 120–165 (ESLKSRVQSYFDGIKADWLDSIRPQKEGNLRKEINKWWNSLSDGQR) are Mitochondrial intermembrane-facing. Residues 166–185 (TVTGIIAANALVFCLWRVPS) traverse the membrane as a helical segment. The Mitochondrial matrix segment spans residues 186–205 (LQRTMIRYFTSNPASKVLCS). A helical transmembrane segment spans residues 206–228 (PMLLSTFSHFSLFHMAANMYVLW). Over 229 to 242 (SFSSSIVNILGQEQ) the chain is Mitochondrial intermembrane. A helical membrane pass occupies residues 243–260 (FVAVYLSAGVISNFVSYV). At 261–270 (CKVATGRYGP) the chain is on the mitochondrial matrix side. The helical transmembrane segment at 271–287 (SLGASGAIMTVLAAVCT) threads the bilayer. S275 (nucleophile) is an active-site residue. Over 288 to 293 (KIPEGR) the chain is Mitochondrial intermembrane. Residues 294 to 316 (LAIIFLPVFTFTAGNALKAIIAM) form a helical membrane-spanning segment. Over 317-330 (DTAGMILGWKFFDH) the chain is Mitochondrial matrix. Residues 331–352 (AAHLGGALFGIWYITYGHELIW) traverse the membrane as a helical segment. H333 is an active-site residue. The Mitochondrial intermembrane segment spans residues 353-377 (KNREPLVKIWHEIRTNGPKKGGGSK).

The protein belongs to the peptidase S54 family. As to quaternary structure, interacts with PSEN1 and PSEN2. Binds OPA1. In terms of processing, P-beta is proteolytically processed (beta-cleavage) in a PARL-dependent manner.

It localises to the mitochondrion inner membrane. It is found in the nucleus. The catalysed reaction is Cleaves type-1 transmembrane domains using a catalytic dyad composed of serine and histidine that are contributed by different transmembrane domains.. In terms of biological role, required for the control of apoptosis during postnatal growth. Essential for proteolytic processing of an antiapoptotic form of OPA1 which prevents the release of mitochondrial cytochrome c in response to intrinsic apoptotic signals. Required for the maturation of PINK1 into its 52kDa mature form after its cleavage by mitochondrial-processing peptidase (MPP). Promotes cleavage of serine/threonine-protein phosphatase PGAM5 in damaged mitochondria in response to loss of mitochondrial membrane potential. Mediates differential cleavage of PINK1 and PGAM5 depending on the health status of mitochondria, disassociating from PINK1 and associating with PGAM5 in response to mitochondrial membrane potential loss. Required for processing of CLPB into a form with higher protein disaggregase activity by removing an autoinhibitory N-terminal peptide. Promotes processing of DIABLO/SMAC in the mitochondrion which is required for DIABLO apoptotic activity. Also required for cleavage of STARD7 and TTC19. Promotes changes in mitochondria morphology regulated by phosphorylation of P-beta domain. In Mus musculus (Mouse), this protein is Presenilin-associated rhomboid-like protein, mitochondrial (Parl).